An 88-amino-acid chain; its full sequence is Small ribosomal subunit protein bS20 (88 aa).

The tract at residues 1 to 27 (MANSKTAKKRAIQSEKRRQHNASRRSM) is disordered.

This sequence belongs to the bacterial ribosomal protein bS20 family.

In terms of biological role, binds directly to 16S ribosomal RNA. In Shewanella amazonensis (strain ATCC BAA-1098 / SB2B), this protein is Small ribosomal subunit protein bS20.